Consider the following 217-residue polypeptide: Putative thymidylate synthase (217 aa).

Residue Cys139 is part of the active site.

The protein belongs to the thymidylate synthase family. Archaeal-type ThyA subfamily. Monomer.

The protein localises to the cytoplasm. The protein operates within pyrimidine metabolism; dTTP biosynthesis. Its function is as follows. May catalyze the biosynthesis of dTMP using an unknown cosubstrate. In Methanosarcina mazei (strain ATCC BAA-159 / DSM 3647 / Goe1 / Go1 / JCM 11833 / OCM 88) (Methanosarcina frisia), this protein is Putative thymidylate synthase.